The primary structure comprises 490 residues: Bifunctional pantoate ligase/cytidylate kinase (490 aa).

1 to 8 serves as a coordination point for ATP; that stretch reads MGGLHQGH. The segment at 1–253 is pantoate--beta-alanine ligase; that stretch reads MGGLHQGHAR…CGETRLIDHV (253 aa). The Proton donor role is filled by histidine 8. Glutamine 35 contributes to the (R)-pantoate binding site. Position 35 (glutamine 35) interacts with beta-alanine. 124–127 contributes to the ATP binding site; that stretch reads GEKD. Glutamine 130 serves as a coordination point for (R)-pantoate. ATP contacts are provided by residues valine 153 and 161–164; that span reads ASSR. The tract at residues 254–490 is cytidylate kinase; the sequence is FIMTRSPIVA…AKEIWPTPQG (237 aa).

In the N-terminal section; belongs to the pantothenate synthetase family. It in the C-terminal section; belongs to the cytidylate kinase family. Type 1 subfamily.

The protein localises to the cytoplasm. It carries out the reaction (R)-pantoate + beta-alanine + ATP = (R)-pantothenate + AMP + diphosphate + H(+). The enzyme catalyses CMP + ATP = CDP + ADP. The catalysed reaction is dCMP + ATP = dCDP + ADP. Its pathway is cofactor biosynthesis; (R)-pantothenate biosynthesis; (R)-pantothenate from (R)-pantoate and beta-alanine: step 1/1. In terms of biological role, catalyzes the condensation of pantoate with beta-alanine in an ATP-dependent reaction via a pantoyl-adenylate intermediate. Functionally, catalyzes the transfer of a phosphate group from ATP to either CMP or dCMP to form CDP or dCDP and ADP, respectively. The protein is Bifunctional pantoate ligase/cytidylate kinase of Synechococcus sp. (strain WH7803).